The sequence spans 699 residues: MPKSVKPISESDKLSDHLRDSSLTSEINKPDFRELDLGSPVSPLRSQPRGLTTTTTTTTTSSSSSSSSGSVTGRIKHAPVIGRSNSVRSQSNSSSGNNNLRPRSDSATTSSSSHSQPLLSSSSSSATSPAPTSPANVLPTGNICPSGKIQITGMTQSRSRSDVLGSGTGTYGHGSIMRGGGISPAKPTNTGGGSNSPVNVGSSSRSSSTVATGETPIWKKAILGSDSEEVKRVGNEMYRKGLFNEALKLYDRAIALSPTNAAYRSNRAAALIGLSRIGEAVKECEDAVRSDPNYGRAHHRLALLLIRLGQVNSARKHLCFLGRPSDPMELQKLEAVEKHLIKCVDARRVTDWKTVLIEADAAIVSGADFSPQLFMCKVEAFLKLHRLDDAQSKLLEVPKVEPFPVSCSQTRFSGMACEAYIYFVKAQIEMALGRFENAVMAAEKASQIDPRCNEVAMLHNTVTLVARARARGNDLYKSERYTEASSAYAEGLRLDPCNAILYCNRAACWFKLGMWERSIEDCNQALRYQPSYTKPLLRRAASNSKMERWGAAVSDYEALIRELPHDKEVAESLFHAQVALKKSRGEEVLNMEFGGEVEEIYSLEQFKSAMNLPGVSVIHFSTASDHQCKQISPFVDSLCTRYPSIHFLKVDIDKCPSIGNAENVRVVPTVKIYKNGSRVKEIVCPSKEVLEYSVRHYSG.

The disordered stretch occupies residues Met-1–Ala-211. A compositionally biased stretch (basic and acidic residues) spans Ser-9 to Asp-20. Ser-39 and Ser-42 each carry phosphoserine. Composition is skewed to low complexity over residues Thr-52–Ser-70 and Arg-83–Ala-135. Residues Ser-166–Ile-182 show a composition bias toward gly residues. Positions Asn-195–Val-210 are enriched in low complexity. 7 TPR repeats span residues Ser-227–Asn-260, Ala-262–Tyr-294, Arg-296–Met-328, Ala-419–Cys-452, Val-465–Asn-498, Ala-499–Tyr-532, and Lys-534–Asp-566. A Thioredoxin domain is found at Gln-605 to Glu-691.

In terms of tissue distribution, expressed in the root elongation zone, stele, root cap, embryo vascular system, leaf axilar buds, silique abscission zone and guard cells.

Involved in responses to osmotic stress and abscisic acid (ABA). May act as a positive regulator of ABA signaling during germination and seedling development under stress. This Arabidopsis thaliana (Mouse-ear cress) protein is TPR repeat-containing thioredoxin TTL1 (TTL1).